A 614-amino-acid chain; its full sequence is Glutamine--fructose-6-phosphate aminotransferase [isomerizing] (614 aa).

C2 serves as the catalytic Nucleophile; for GATase activity. Residues 2 to 223 (CGIIGYIGRR…DGEMAVVTRD (222 aa)) enclose the Glutamine amidotransferase type-2 domain. 2 SIS domains span residues 292–431 (YLDR…GRTI) and 463–604 (IAVK…VDRP). K609 (for Fru-6P isomerization activity) is an active-site residue.

In terms of assembly, homodimer.

The protein resides in the cytoplasm. It carries out the reaction D-fructose 6-phosphate + L-glutamine = D-glucosamine 6-phosphate + L-glutamate. Functionally, catalyzes the first step in hexosamine metabolism, converting fructose-6P into glucosamine-6P using glutamine as a nitrogen source. In Chlorobaculum tepidum (strain ATCC 49652 / DSM 12025 / NBRC 103806 / TLS) (Chlorobium tepidum), this protein is Glutamine--fructose-6-phosphate aminotransferase [isomerizing].